A 271-amino-acid chain; its full sequence is Phosphate import ATP-binding protein PstB 2 (271 aa).

A disordered region spans residues 1-20 (MLTKKPEINTILQTTPDPHS). The ABC transporter domain maps to 25-266 (MATEDLHVYY…PQEKQTEDYI (242 aa)). 57-64 (GPSGCGKS) is a binding site for ATP.

The protein belongs to the ABC transporter superfamily. Phosphate importer (TC 3.A.1.7) family. As to quaternary structure, the complex is composed of two ATP-binding proteins (PstB), two transmembrane proteins (PstC and PstA) and a solute-binding protein (PstS).

It localises to the cell membrane. The catalysed reaction is phosphate(out) + ATP + H2O = ADP + 2 phosphate(in) + H(+). Functionally, part of the ABC transporter complex PstSACB involved in phosphate import. Responsible for energy coupling to the transport system. This is Phosphate import ATP-binding protein PstB 2 from Listeria innocua serovar 6a (strain ATCC BAA-680 / CLIP 11262).